A 261-amino-acid chain; its full sequence is Cytochrome c oxidase subunit 3 (261 aa).

Over Met1–Pro15 the chain is Mitochondrial matrix. The chain crosses the membrane as a helical span at residues Trp16–Trp34. At Phe35–Thr40 the chain is on the mitochondrial intermembrane side. Residues Leu41–Thr66 form a helical membrane-spanning segment. Residues Phe67–Thr72 are Mitochondrial matrix-facing. Residues Ser73 to Ser105 form a helical membrane-spanning segment. At Leu106–Glu128 the chain is on the mitochondrial intermembrane side. Residues Val129–Met152 traverse the membrane as a helical segment. At Glu153–Asn155 the chain is on the mitochondrial matrix side. The chain crosses the membrane as a helical span at residues Arg156 to Glu183. The Mitochondrial intermembrane portion of the chain corresponds to Ala184 to Asp190. The chain crosses the membrane as a helical span at residues Gly191–Leu223. At Lys224–His232 the chain is on the mitochondrial matrix side. The chain crosses the membrane as a helical span at residues Phe233–Ile256. The Mitochondrial intermembrane portion of the chain corresponds to Tyr257 to Ser261.

The protein belongs to the cytochrome c oxidase subunit 3 family. In terms of assembly, component of the cytochrome c oxidase (complex IV, CIV), a multisubunit enzyme composed of 14 subunits. The complex is composed of a catalytic core of 3 subunits MT-CO1, MT-CO2 and MT-CO3, encoded in the mitochondrial DNA, and 11 supernumerary subunits COX4I, COX5A, COX5B, COX6A, COX6B, COX6C, COX7A, COX7B, COX7C, COX8 and NDUFA4, which are encoded in the nuclear genome. The complex exists as a monomer or a dimer and forms supercomplexes (SCs) in the inner mitochondrial membrane with NADH-ubiquinone oxidoreductase (complex I, CI) and ubiquinol-cytochrome c oxidoreductase (cytochrome b-c1 complex, complex III, CIII), resulting in different assemblies (supercomplex SCI(1)III(2)IV(1) and megacomplex MCI(2)III(2)IV(2)).

The protein localises to the mitochondrion inner membrane. It carries out the reaction 4 Fe(II)-[cytochrome c] + O2 + 8 H(+)(in) = 4 Fe(III)-[cytochrome c] + 2 H2O + 4 H(+)(out). Functionally, component of the cytochrome c oxidase, the last enzyme in the mitochondrial electron transport chain which drives oxidative phosphorylation. The respiratory chain contains 3 multisubunit complexes succinate dehydrogenase (complex II, CII), ubiquinol-cytochrome c oxidoreductase (cytochrome b-c1 complex, complex III, CIII) and cytochrome c oxidase (complex IV, CIV), that cooperate to transfer electrons derived from NADH and succinate to molecular oxygen, creating an electrochemical gradient over the inner membrane that drives transmembrane transport and the ATP synthase. Cytochrome c oxidase is the component of the respiratory chain that catalyzes the reduction of oxygen to water. Electrons originating from reduced cytochrome c in the intermembrane space (IMS) are transferred via the dinuclear copper A center (CU(A)) of subunit 2 and heme A of subunit 1 to the active site in subunit 1, a binuclear center (BNC) formed by heme A3 and copper B (CU(B)). The BNC reduces molecular oxygen to 2 water molecules using 4 electrons from cytochrome c in the IMS and 4 protons from the mitochondrial matrix. In Equus caballus (Horse), this protein is Cytochrome c oxidase subunit 3 (MT-CO3).